Consider the following 163-residue polypeptide: Urease accessory protein UreE (163 aa).

The segment at 130-163 is disordered; it reads PFEPEPGAYGGGHGHTHSHDHSHQHDPAGHAHEH. Positions 146–163 are enriched in basic and acidic residues; sequence HSHDHSHQHDPAGHAHEH.

This sequence belongs to the UreE family.

The protein resides in the cytoplasm. Involved in urease metallocenter assembly. Binds nickel. Probably functions as a nickel donor during metallocenter assembly. The polypeptide is Urease accessory protein UreE (Alkalilimnicola ehrlichii (strain ATCC BAA-1101 / DSM 17681 / MLHE-1)).